The following is a 317-amino-acid chain: Serpentine receptor class delta-46 (317 aa).

The next 7 helical transmembrane spans lie at 9 to 29, 42 to 62, 91 to 111, 129 to 149, 185 to 205, 239 to 259, and 269 to 289; these read FYIIFFLIVFPTQLLLLYVII, IFLCNCSCQIFSMITLVLLQA, YVLCEGTVLMSSILIFITMYV, VIILSLSPLFITMSAEAYLTI, QIVFCTICGFFVIFPLIMFCL, AFLPLFCVCPIFICSFVALIT, and FVSVVLLLPTFFEPYITFYTV.

This sequence belongs to the nematode receptor-like protein srd family.

It is found in the membrane. This is Serpentine receptor class delta-46 (srd-46) from Caenorhabditis elegans.